The following is an 89-amino-acid chain: Protein WFDC9 (89 aa).

The signal sequence occupies residues 1-23 (MKPWILLLVMFISGVVMLLPVLG).

It is found in the secreted. This is Protein WFDC9 (WFDC9) from Homo sapiens (Human).